Consider the following 274-residue polypeptide: Rhamnulose-1-phosphate aldolase (274 aa).

Glu117 is an active-site residue. Residues His141, His143, and His212 each coordinate Zn(2+).

Belongs to the aldolase class II family. RhaD subfamily. As to quaternary structure, homotetramer. Requires Zn(2+) as cofactor.

Its subcellular location is the cytoplasm. The catalysed reaction is L-rhamnulose 1-phosphate = (S)-lactaldehyde + dihydroxyacetone phosphate. The protein operates within carbohydrate degradation; L-rhamnose degradation; glycerone phosphate from L-rhamnose: step 3/3. In terms of biological role, catalyzes the reversible cleavage of L-rhamnulose-1-phosphate to dihydroxyacetone phosphate (DHAP) and L-lactaldehyde. The polypeptide is Rhamnulose-1-phosphate aldolase (Shigella boydii serotype 4 (strain Sb227)).